Here is a 98-residue protein sequence, read N- to C-terminus: MANNQAAKKRIEIAERNRLRNRTYKSALRTLMKRCFVACEAYSKEPGDAAKATVSASMNAAFSKIDKAVKVGVLHRNNGAHQKSRLSATVRQVLEPSS.

It belongs to the bacterial ribosomal protein bS20 family.

Functionally, binds directly to 16S ribosomal RNA. This Parasynechococcus marenigrum (strain WH8102) protein is Small ribosomal subunit protein bS20.